The primary structure comprises 580 residues: Jasmonoyl--L-amino acid synthetase JAR6 (580 aa).

Ser100 is an ATP binding site. Ser103 contributes to the jasmonate binding site. Residues Met120, Thr123, Gly164, Asn169, and Gly332–Trp337 contribute to the ATP site. Thr167–Tyr171 provides a ligand contact to an L-alpha-amino acid. Ala329–Gly332 contacts jasmonate. An L-alpha-amino acid is bound at residue Lys534–His538.

The protein belongs to the IAA-amido conjugating enzyme family.

It carries out the reaction a jasmonate + an L-alpha-amino acid + ATP = a jasmonyl-L-amino acid + AMP + diphosphate + H(+). Catalyzes the synthesis of jasmonate-amino acid conjugates by adenylation. Catalyzes the conjugation of jasmonate (JA) to Ile, Leu and Val. Catalyzes the conjugation of JA to Ile that may mediate defense signaling and resistance to the herbivore Manduca sexta caterpillars. This chain is Jasmonoyl--L-amino acid synthetase JAR6 (JAR6), found in Nicotiana attenuata (Coyote tobacco).